A 294-amino-acid polypeptide reads, in one-letter code: Antiviral protein alpha (294 aa).

A signal peptide spans 1–24 (MKMMVVVVVMMLSWLILKPPSTWA). Disulfide bonds link Cys58–Cys282 and Cys108–Cys130. Glu199 is an active-site residue. A propeptide spanning residues 286–294 (YQSAMFPHL) is cleaved from the precursor.

Belongs to the ribosome-inactivating protein family. Type 1 RIP subfamily. Monomer.

Its subcellular location is the secreted. It is found in the cell wall. The catalysed reaction is Endohydrolysis of the N-glycosidic bond at one specific adenosine on the 28S rRNA.. In terms of biological role, inhibits viral infection of plants, and protein synthesis in vitro. Has also been shown to inhibit the replication of mammalian viruses. The protein may provide a means of cellular suicide upon invasion by a virus. The polypeptide is Antiviral protein alpha (Phytolacca americana (American pokeweed)).